The following is a 516-amino-acid chain: Cytochrome P450 93G1 (516 aa).

The helical transmembrane segment at 11–31 threads the bilayer; sequence LLGMGTTMGALALALVVVVVV. A heme-binding site is contributed by Cys454.

Belongs to the cytochrome P450 family. It depends on heme as a cofactor.

Its subcellular location is the membrane. The enzyme catalyses a flavanone + reduced [NADPH--hemoprotein reductase] + O2 = a flavone + oxidized [NADPH--hemoprotein reductase] + 2 H2O + H(+). Its pathway is secondary metabolite biosynthesis; flavonoid biosynthesis. Its function is as follows. Functions as a flavone synthase II (FNSII) that catalyzes the direct conversion of flavanones to flavones. In vitro, can convert naringenin and eriodictyol to apigenin and luteolin, respectively. Acts as a key branch point enzyme that channels flavanones to the biosynthesis of soluble tricin O-linked conjugates. The protein is Cytochrome P450 93G1 of Oryza sativa subsp. japonica (Rice).